The primary structure comprises 142 residues: Large ribosomal subunit protein uL11 (142 aa).

The protein belongs to the universal ribosomal protein uL11 family. As to quaternary structure, part of the ribosomal stalk of the 50S ribosomal subunit. Interacts with L10 and the large rRNA to form the base of the stalk. L10 forms an elongated spine to which L12 dimers bind in a sequential fashion forming a multimeric L10(L12)X complex. One or more lysine residues are methylated.

Its function is as follows. Forms part of the ribosomal stalk which helps the ribosome interact with GTP-bound translation factors. This Pectobacterium carotovorum subsp. carotovorum (strain PC1) protein is Large ribosomal subunit protein uL11.